We begin with the raw amino-acid sequence, 368 residues long: Protein mab-21-like (368 aa).

This sequence belongs to the mab-21 family.

This Drosophila pseudoobscura pseudoobscura (Fruit fly) protein is Protein mab-21-like.